A 294-amino-acid chain; its full sequence is Sperm acrosome membrane-associated protein 1 (294 aa).

A signal peptide spans 1–29 (MSPRGTGCSAGLLMTVGWLLLAGLQSARG). The Extracellular segment spans residues 30-221 (TNVTAAVQDA…LPATDAALIF (192 aa)). Residue Asn-31 is glycosylated (N-linked (GlcNAc...) asparagine). Positions 42 to 70 (AHEGEGEEETENNDSETAENYAPPETEDV) are disordered. Over residues 46–58 (EGEEETENNDSET) the composition is skewed to acidic residues. A helical transmembrane segment spans residues 222–242 (VLTIGVIICVFIIFLLIFIII). Topologically, residues 243 to 294 (NWAAVKAFWGAKASTPEVQSEQSSVRYKDSTSLDQLPTEMPGEDDALSEWNE) are cytoplasmic. Ser-256 carries the post-translational modification Phosphoserine. Polar residues predominate over residues 258–267 (PEVQSEQSSV). The tract at residues 258–294 (PEVQSEQSSVRYKDSTSLDQLPTEMPGEDDALSEWNE) is disordered. Residue Tyr-269 is modified to Phosphotyrosine. A compositionally biased stretch (acidic residues) spans 283 to 294 (PGEDDALSEWNE). A Phosphoserine modification is found at Ser-290.

Interacts with CYLC1; the interaction may be relevant for proper acrosome attachment to the nuclear envelope. N-glycosylated. As to expression, testis specific.

The protein resides in the cytoplasmic vesicle. It is found in the secretory vesicle. The protein localises to the acrosome inner membrane. In terms of biological role, plays a role in acrosome formation and establishment of normal sperm morphology during spermatogenesis. Important for male fertility. The polypeptide is Sperm acrosome membrane-associated protein 1 (SPACA1) (Homo sapiens (Human)).